A 309-amino-acid chain; its full sequence is Methionyl-tRNA formyltransferase (309 aa).

109–112 (SLLP) provides a ligand contact to (6S)-5,6,7,8-tetrahydrofolate.

This sequence belongs to the Fmt family.

The enzyme catalyses L-methionyl-tRNA(fMet) + (6R)-10-formyltetrahydrofolate = N-formyl-L-methionyl-tRNA(fMet) + (6S)-5,6,7,8-tetrahydrofolate + H(+). Functionally, attaches a formyl group to the free amino group of methionyl-tRNA(fMet). The formyl group appears to play a dual role in the initiator identity of N-formylmethionyl-tRNA by promoting its recognition by IF2 and preventing the misappropriation of this tRNA by the elongation apparatus. The polypeptide is Methionyl-tRNA formyltransferase (Clostridium perfringens (strain SM101 / Type A)).